The following is a 411-amino-acid chain: Arginine deiminase (411 aa).

The active-site Amidino-cysteine intermediate is the Cys-401.

The protein belongs to the arginine deiminase family.

Its subcellular location is the cytoplasm. The catalysed reaction is L-arginine + H2O = L-citrulline + NH4(+). It participates in amino-acid degradation; L-arginine degradation via ADI pathway; carbamoyl phosphate from L-arginine: step 1/2. The chain is Arginine deiminase from Streptococcus equi subsp. equi (strain 4047).